Here is a 377-residue protein sequence, read N- to C-terminus: Probable protein phosphatase 2C 61 (377 aa).

Residues 30–338 (AAGEFSMAAA…DDITAVVVFL (309 aa)) enclose the PPM-type phosphatase domain. Mn(2+)-binding residues include aspartate 64, glycine 65, aspartate 269, and aspartate 329.

This sequence belongs to the PP2C family. It depends on Mg(2+) as a cofactor. Mn(2+) is required as a cofactor.

It catalyses the reaction O-phospho-L-seryl-[protein] + H2O = L-seryl-[protein] + phosphate. The catalysed reaction is O-phospho-L-threonyl-[protein] + H2O = L-threonyl-[protein] + phosphate. This Oryza sativa subsp. japonica (Rice) protein is Probable protein phosphatase 2C 61.